The following is a 53-amino-acid chain: Large ribosomal subunit protein bL33 (53 aa).

This sequence belongs to the bacterial ribosomal protein bL33 family.

This Blochmanniella floridana protein is Large ribosomal subunit protein bL33.